We begin with the raw amino-acid sequence, 1400 residues long: Clustered mitochondria protein homolog (1400 aa).

3 disordered regions span residues 1-39, 56-78, and 212-243; these read MVSKTDDIPASVPNCSPADFARDGETANSKGTTSKKEAS, GHDQAEEADSKQDGSGDADQAED, and GDTGKRKKKGSELEQIDCTPPEHILPGSKERP. A compositionally biased stretch (basic and acidic residues) spans 56-69; it reads GHDQAEEADSKQDG. Residues 380–622 enclose the Clu domain; the sequence is RAEDAYTSRL…RTFPPDLNFL (243 aa). Residues 684–741 form a disordered region; sequence AALQDSNAAGAGSENKPLALESCDGTPDSPTSSESTLTPEDSEATTVSENSSAENQEA. The segment covering 707-722 has biased composition (low complexity); it reads DGTPDSPTSSESTLTP. Polar residues predominate over residues 727–741; the sequence is ATTVSENSSAENQEA. TPR repeat units lie at residues 1088 to 1121, 1130 to 1163, 1172 to 1205, and 1214 to 1247; these read AFHFFQSGQAKVQQGFLKEGCELINEALNLFNNV, CACLRLLARLNYIMGDHPEALSNQQKAVLMSERV, IQEYMHLALYCFANGQLSTALKLLYRARYLMLVV, and ALLDSNIGLVLHGVMEYDLSLRFLENALAINTKY. Residues 1377 to 1388 are compositionally biased toward polar residues; that stretch reads QDSGKIQEQQGS. The disordered stretch occupies residues 1377 to 1400; sequence QDSGKIQEQQGSHLELDDKLPVDD. Positions 1390-1400 are enriched in basic and acidic residues; that stretch reads LELDDKLPVDD.

Belongs to the CLU family.

It localises to the cytoplasm. In terms of biological role, mRNA-binding protein involved in proper cytoplasmic distribution of mitochondria. This is Clustered mitochondria protein homolog from Danio rerio (Zebrafish).